Reading from the N-terminus, the 127-residue chain is Thioredoxin domain-containing protein 8 (127 aa).

A Thioredoxin domain is found at Val-2–Met-127. The cysteines at positions 32 and 35 are disulfide-linked.

This sequence belongs to the thioredoxin family. In terms of tissue distribution, testis-specific. Only expressed during spermiogenesis, prominently in the Golgi apparatus of pachytene spermatocytes and round and elongated spermatids, with a transient localization in the developing acrosome of round spermatids (at protein level).

It localises to the cytoplasm. The protein resides in the golgi apparatus. May be required for post-translational modifications of proteins required for acrosomal biogenesis. May act by reducing disulfide bonds within the sperm. The chain is Thioredoxin domain-containing protein 8 (Txndc8) from Mus musculus (Mouse).